Consider the following 333-residue polypeptide: Calcium uniporter protein, mitochondrial (333 aa).

The transit peptide at 1-22 (MRNGRCLVTPFVTAQRLANLRN) directs the protein to the mitochondrion. The Mitochondrial matrix portion of the chain corresponds to 23–214 (TLWNRQQIAF…QECEAHTDRV (192 aa)). Residues 180–193 (KKLLLQLENAETLL) adopt a coiled-coil conformation. An outer juxtamembrane helix (OJMH) region spans residues 195–213 (PLHDAKRKIEQECEAHTDR). A helical membrane pass occupies residues 215 to 234 (MWAGFAAMGVQTGLFARLTW). The Mitochondrial intermembrane portion of the chain corresponds to 235–243 (WEYSWDIME). The short motif at 239–247 (WDIMEPVTY) is the Selectivity filter element. Residue Glu243 participates in Ca(2+) binding. A helical membrane pass occupies residues 244 to 260 (PVTYFATYSTVCATFGY). At 261 to 333 (YLYTQQSFEY…SYLSNLEAEK (73 aa)) the chain is on the mitochondrial matrix side. The segment at 262–271 (LYTQQSFEYP) is inner juxtamembrane helix (IJMH). A coiled-coil region spans residues 289 to 316 (QNFDIEKYNRLVTEVDELRNQLKRMRDP).

Belongs to the MCU (TC 1.A.77) family.

It is found in the mitochondrion inner membrane. The enzyme catalyses Ca(2+)(in) = Ca(2+)(out). With respect to regulation, inhibited by ruthenium red or its derivative Ru360; possibly by obstructing the pore. Functionally, mitochondrial inner membrane calcium uniporter that mediates calcium uptake into mitochondria. Constitutes a pore-forming and calcium-conducting subunit. Mitochondrial calcium homeostasis plays key roles in cellular physiology and regulates cell bioenergetics, cytoplasmic calcium signals and activation of cell death pathways. Required for rapid mitochondrial calcium uptake and mitochondrial reactive oxygen species (mtROS) production after wounding. In addition, together with mitochondrial calcium regulator micu-1, required for mitochondrial calcium uptake following axon injury in PLM touch receptor neurons. This is Calcium uniporter protein, mitochondrial from Caenorhabditis elegans.